The following is a 146-amino-acid chain: Hemoglobin subunit beta (146 aa).

Residues 2–146 enclose the Globin domain; sequence FLTAEEKGLV…VANALAHKYH (145 aa). Ser-44 carries the phosphoserine modification. An N6-acetyllysine modification is found at Lys-59. His-63 contributes to the heme b binding site. At Lys-82 the chain carries N6-acetyllysine. Residue His-92 coordinates heme b. At Cys-93 the chain carries S-nitrosocysteine. Lys-144 bears the N6-acetyllysine mark.

This sequence belongs to the globin family. As to quaternary structure, heterotetramer of two alpha chains and two beta chains. In terms of tissue distribution, red blood cells.

Its function is as follows. Involved in oxygen transport from the lung to the various peripheral tissues. This chain is Hemoglobin subunit beta (HBB), found in Lynx lynx (Eurasian lynx).